We begin with the raw amino-acid sequence, 468 residues long: Methionine aminopeptidase 2 (468 aa).

The segment covering 63 to 74 (AAKEATKKDAKG) has biased composition (basic and acidic residues). The interval 63–87 (AAKEATKKDAKGGKGKANGSAAATA) is disordered. Residue His219 coordinates substrate. The a divalent metal cation site is built by Asp239, Asp250, and His319. His327 contacts substrate. Residues Glu352 and Glu449 each coordinate a divalent metal cation.

The protein belongs to the peptidase M24A family. Methionine aminopeptidase eukaryotic type 2 subfamily. Co(2+) is required as a cofactor. It depends on Zn(2+) as a cofactor. Mn(2+) serves as cofactor. Requires Fe(2+) as cofactor.

The protein localises to the cytoplasm. It catalyses the reaction Release of N-terminal amino acids, preferentially methionine, from peptides and arylamides.. With respect to regulation, inhibited by the fumagillin analog, TNP-470. Cotranslationally removes the N-terminal methionine from nascent proteins. The N-terminal methionine is often cleaved when the second residue in the primary sequence is small and uncharged (Met-Ala-, Cys, Gly, Pro, Ser, Thr, or Val). Required for germ cell proliferation and/or differentiation. The chain is Methionine aminopeptidase 2 from Caenorhabditis elegans.